A 77-amino-acid chain; its full sequence is U11-lycotoxin-Ls1b (77 aa).

A signal peptide spans 1–20 (MKLIIFTGLALFAIVSLIEA). Positions 21 to 26 (EEESGR) are excised as a propeptide.

The protein belongs to the neurotoxin 19 (CSTX) family. 10 (U11-Lctx) subfamily. Contains 4 disulfide bonds. Expressed by the venom gland.

The protein resides in the secreted. This is U11-lycotoxin-Ls1b from Lycosa singoriensis (Wolf spider).